The chain runs to 315 residues: Thymidylate synthase (315 aa).

DUMP contacts are provided by residues Arg22 and 177-178 (RR). The Nucleophile role is filled by Cys197. DUMP-binding positions include 217–220 (RSAD), Asn228, and 258–260 (HLY). Asp220 serves as a coordination point for (6R)-5,10-methylene-5,6,7,8-tetrahydrofolate. Residue Ala314 participates in (6R)-5,10-methylene-5,6,7,8-tetrahydrofolate binding.

The protein belongs to the thymidylate synthase family. Bacterial-type ThyA subfamily. Homodimer.

It localises to the cytoplasm. It carries out the reaction dUMP + (6R)-5,10-methylene-5,6,7,8-tetrahydrofolate = 7,8-dihydrofolate + dTMP. It functions in the pathway pyrimidine metabolism; dTTP biosynthesis. Functionally, catalyzes the reductive methylation of 2'-deoxyuridine-5'-monophosphate (dUMP) to 2'-deoxythymidine-5'-monophosphate (dTMP) while utilizing 5,10-methylenetetrahydrofolate (mTHF) as the methyl donor and reductant in the reaction, yielding dihydrofolate (DHF) as a by-product. This enzymatic reaction provides an intracellular de novo source of dTMP, an essential precursor for DNA biosynthesis. In Enterococcus faecalis (strain ATCC 700802 / V583), this protein is Thymidylate synthase.